We begin with the raw amino-acid sequence, 275 residues long: 1-deoxy-11-beta-hydroxypentalenate dehydrogenase (275 aa).

Position 12–36 (12–36 (GAASGIGLALSARFARAGAGVVMAD)) interacts with NAD(+). Position 144 (Ser144) interacts with substrate. Tyr157 serves as the catalytic Proton acceptor. Residue Lys161 participates in NAD(+) binding.

This sequence belongs to the short-chain dehydrogenases/reductases (SDR) family.

It catalyses the reaction 1-deoxy-11beta-hydroxypentalenate + NAD(+) = 1-deoxy-11-oxopentalenate + NADH + H(+). It functions in the pathway antibiotic biosynthesis; pentalenolactone biosynthesis. Its function is as follows. Catalyzes the oxidation of 1-deoxy-11-beta-hydroxypentalenic acid to 1-deoxy-11-oxopentalenic acid in the biosynthesis of pentalenolactone antibiotic. In Streptomyces exfoliatus (Streptomyces hydrogenans), this protein is 1-deoxy-11-beta-hydroxypentalenate dehydrogenase (penF).